A 379-amino-acid chain; its full sequence is Cinnamyl alcohol dehydrogenase 7 (379 aa).

A compositionally biased stretch (low complexity) spans 1–13 (MAPTTTATAAAEQ). Positions 1 to 21 (MAPTTTATAAAEQAPPPQHTR) are disordered. Cys60 is a binding site for Zn(2+). Residue Ser62 participates in NADP(+) binding. Residues His82, Glu83, Cys113, Cys116, Cys119, Cys127, and Cys185 each coordinate Zn(2+). Residues Thr189, 210-215 (GLGGLG), 233-238 (STSPVK), Thr273, Gly297, and 320-322 (SCM) contribute to the NADP(+) site.

It belongs to the zinc-containing alcohol dehydrogenase family. In terms of assembly, homodimer. Requires Zn(2+) as cofactor. As to expression, expressed in roots, first internodes and panicles. Expressed in the vascular bundles and sclerenchyma cells below the epidermis in leaves and stems.

It catalyses the reaction (E)-cinnamyl alcohol + NADP(+) = (E)-cinnamaldehyde + NADPH + H(+). The catalysed reaction is (E)-coniferol + NADP(+) = (E)-coniferaldehyde + NADPH + H(+). It carries out the reaction (E)-sinapyl alcohol + NADP(+) = (E)-sinapaldehyde + NADPH + H(+). The enzyme catalyses (E)-4-coumaroyl alcohol + NADP(+) = (E)-4-coumaraldehyde + NADPH + H(+). It catalyses the reaction (E)-caffeyl alcohol + NADP(+) = (E)-caffeyl aldehyde + NADPH + H(+). Its pathway is aromatic compound metabolism; phenylpropanoid biosynthesis. Its function is as follows. Involved in lignin biosynthesis. May catalyze the final step specific for the production of lignin monomers, like coniferyl alcohol, sinapyl alcohol and 4-coumaryl alcohol. In Oryza sativa subsp. japonica (Rice), this protein is Cinnamyl alcohol dehydrogenase 7.